A 101-amino-acid chain; its full sequence is Urease subunit beta (101 aa).

Belongs to the urease beta subunit family. In terms of assembly, heterotrimer of UreA (gamma), UreB (beta) and UreC (alpha) subunits. Three heterotrimers associate to form the active enzyme.

The protein resides in the cytoplasm. It catalyses the reaction urea + 2 H2O + H(+) = hydrogencarbonate + 2 NH4(+). The protein operates within nitrogen metabolism; urea degradation; CO(2) and NH(3) from urea (urease route): step 1/1. This chain is Urease subunit beta, found in Stutzerimonas stutzeri (strain A1501) (Pseudomonas stutzeri).